The chain runs to 1086 residues: Selenocysteine insertion sequence-binding protein 2-like (1086 aa).

Disordered regions lie at residues 155–207 (GQAF…GPDS), 243–386 (AKGR…SESL), 615–657 (QEDA…SPMA), 880–904 (SDGLEPSEMEKAAPCTHSPPEKPSR), and 919–1086 (AAGS…PQST). Over residues 193–206 (NVATQKETSATGPD) the composition is skewed to polar residues. Phosphoserine is present on Ser276. Composition is skewed to polar residues over residues 294–303 (GTMNRLESSG) and 328–344 (QAFSRGGRQTEQRNNLQ). Over residues 355-370 (SSERRQNLQKRQDNKH) the composition is skewed to basic and acidic residues. Residues 624–657 (SDASLSPASQNSPYCMTPVSQGSPASSGIGSPMA) are compositionally biased toward polar residues. The segment covering 922–931 (SITSAPSQGK) has biased composition (polar residues). Over residues 933–943 (TGDKDELKPDD) the composition is skewed to basic and acidic residues. The segment covering 947–957 (ASQQSTETGSL) has biased composition (polar residues). Positions 981–994 (LEEEEDEEEEEEDY) are enriched in acidic residues. Positions 1004–1022 (QLNSRIESWVSETQRTMET) are enriched in polar residues. A compositionally biased stretch (acidic residues) spans 1032–1046 (SEEDSAEQSGEEAAE).

Its function is as follows. Binds SECIS (Sec insertion sequence) elements present on selenocysteine (Sec) protein mRNAs, but does not promote Sec incorporation into selenoproteins. The polypeptide is Selenocysteine insertion sequence-binding protein 2-like (Secisbp2l) (Mus musculus (Mouse)).